The primary structure comprises 593 residues: Probable tripeptidyl-peptidase SED3 (593 aa).

An N-terminal signal peptide occupies residues 1–18; that stretch reads MLLRWHSVIPLFLTMTVA. Positions 19-198 are cleaved as a propeptide — removed in mature form; sequence LPNTYRTVVE…SLQVIYSSTN (180 aa). Residues Asn198, Asn204, Asn261, and Asn275 are each glycosylated (N-linked (GlcNAc...) asparagine). Residues 206 to 592 form the Peptidase S53 domain; it reads TITPRCLREL…RILAKIVQHM (387 aa). Catalysis depends on charge relay system residues Glu282 and Asp286. N-linked (GlcNAc...) asparagine glycosylation is present at Asn295. Residue Ser496 is the Charge relay system of the active site. Residues Asp538 and Ile539 each coordinate Ca(2+). Residues Asn554 and Asn566 are each glycosylated (N-linked (GlcNAc...) asparagine). 2 residues coordinate Ca(2+): Gly570 and Asp572.

It depends on Ca(2+) as a cofactor.

Its subcellular location is the secreted. The protein localises to the extracellular space. The enzyme catalyses Release of an N-terminal tripeptide from a polypeptide.. Functionally, secreted tripeptidyl-peptidase which degrades proteins at acidic pHs and is involved in virulence. The sequence is that of Probable tripeptidyl-peptidase SED3 (SED3) from Trichophyton verrucosum (strain HKI 0517).